The following is a 248-amino-acid chain: PACRG-like protein (248 aa).

Met-1 carries the post-translational modification N-acetylmethionine. Positions 1–72 (MQRSECSGGV…NPKTINPFGE (72 aa)) are disordered. 2 stretches are compositionally biased toward polar residues: residues 14–29 (NRAT…SSTQ) and 36–45 (VQRSKSSSLT). At Ser-47 the chain carries Phosphoserine.

This is PACRG-like protein (Pacrgl) from Mus musculus (Mouse).